Here is a 117-residue protein sequence, read N- to C-terminus: NADH-ubiquinone oxidoreductase chain 3 (117 aa).

The next 3 helical transmembrane spans lie at 1–21 (MKFI…LLLL), 58–78 (FLMT…LPII), and 86–106 (TMIS…TLIL).

It belongs to the complex I subunit 3 family.

Its subcellular location is the mitochondrion membrane. The enzyme catalyses a ubiquinone + NADH + 5 H(+)(in) = a ubiquinol + NAD(+) + 4 H(+)(out). Its function is as follows. Core subunit of the mitochondrial membrane respiratory chain NADH dehydrogenase (Complex I) that is believed to belong to the minimal assembly required for catalysis. Complex I functions in the transfer of electrons from NADH to the respiratory chain. The immediate electron acceptor for the enzyme is believed to be ubiquinone. This chain is NADH-ubiquinone oxidoreductase chain 3 (ND3), found in Apis mellifera ligustica (Common honeybee).